The sequence spans 108 residues: QESTVIVMLTRVNENGRRKCEKYWPDHREQTTFDNLIVSSINVSEYGQIIKRSFQLWNPNQPGKKLLVEQFHYITWPDHGVPITTSDLFNLRRMVIESQGNNPSPIIV.

One can recognise a Tyrosine-protein phosphatase domain in the interval 1-108 (QESTVIVMLT…QGNNPSPIIV (108 aa)). Substrate is bound at residue aspartate 78.

This sequence belongs to the protein-tyrosine phosphatase family.

It carries out the reaction O-phospho-L-tyrosyl-[protein] + H2O = L-tyrosyl-[protein] + phosphate. The chain is Tyrosine-protein phosphatase 5 (STY-5) from Styela plicata (Wrinkled sea squirt).